We begin with the raw amino-acid sequence, 91 residues long: Cell division topological specificity factor (91 aa).

This sequence belongs to the MinE family.

Prevents the cell division inhibition by proteins MinC and MinD at internal division sites while permitting inhibition at polar sites. This ensures cell division at the proper site by restricting the formation of a division septum at the midpoint of the long axis of the cell. This Thermoanaerobacter pseudethanolicus (strain ATCC 33223 / 39E) (Clostridium thermohydrosulfuricum) protein is Cell division topological specificity factor.